The following is a 274-amino-acid chain: Thiamine kinase (274 aa).

Belongs to the thiamine kinase family.

It carries out the reaction thiamine + ATP = thiamine phosphate + ADP + H(+). Its pathway is cofactor biosynthesis; thiamine diphosphate biosynthesis; thiamine phosphate from thiamine: step 1/1. Its function is as follows. Catalyzes the ATP-dependent phosphorylation of thiamine to thiamine phosphate. Is involved in thiamine salvage. In Salmonella newport (strain SL254), this protein is Thiamine kinase.